Here is a 222-residue protein sequence, read N- to C-terminus: Glutathione S-transferase A4 (222 aa).

Met1 carries the N-acetylmethionine modification. One can recognise a GST N-terminal domain in the interval 3 to 83 (AKPKLYYFNG…YLAAKYNLYG (81 aa)). Glutathione-binding positions include Tyr9, 53 to 55 (GQV), and 66 to 68 (TQT). In terms of domain architecture, GST C-terminal spans 85–208 (DLKERVRIDM…QPGSQRKPPP (124 aa)).

This sequence belongs to the GST superfamily. Alpha family. Homodimer. In terms of processing, the N-terminus is blocked.

The protein localises to the cytoplasm. It catalyses the reaction RX + glutathione = an S-substituted glutathione + a halide anion + H(+). Its function is as follows. Conjugation of reduced glutathione to a wide number of exogenous and endogenous hydrophobic electrophiles. This is Glutathione S-transferase A4 (Gsta4) from Mus musculus (Mouse).